The sequence spans 79 residues: Translational regulator CsrA (79 aa).

The protein belongs to the CsrA/RsmA family. In terms of assembly, homodimer; the beta-strands of each monomer intercalate to form a hydrophobic core, while the alpha-helices form wings that extend away from the core.

It localises to the cytoplasm. Functionally, a translational regulator that binds mRNA to regulate translation initiation and/or mRNA stability. Usually binds in the 5'-UTR at or near the Shine-Dalgarno sequence preventing ribosome-binding, thus repressing translation. Its main target seems to be the major flagellin gene, while its function is anatagonized by FliW. This is Translational regulator CsrA from Geotalea uraniireducens (strain Rf4) (Geobacter uraniireducens).